Reading from the N-terminus, the 706-residue chain is Lethal(3)malignant brain tumor-like protein 2 (706 aa).

Residues 1–85 (MEKPRGVEET…GTPRSLDGSG (85 aa)) form a disordered region. Position 13 is a phosphoserine (Ser-13). The segment covering 15 to 26 (PMEEEEEDDDLE) has biased composition (acidic residues). A compositionally biased stretch (low complexity) spans 39–50 (SSAGSESSSYLE). The segment covering 54-63 (EAEHEDREAG) has biased composition (basic and acidic residues). The residue at position 68 (Ser-68) is a Phosphoserine. At Thr-77 the chain carries Phosphothreonine. The FCS-type zinc finger occupies 82-117 (DGSGSEPAVCEMCGIVGTREAFFSKTKRFCSVSCSR). Zn(2+) is bound by residues Cys-91, Cys-94, Cys-111, and Cys-115. MBT repeat units follow at residues 180–284 (FDWG…LVPP), 292–392 (TDWK…IKLS), 398–501 (MAHH…LTPP), and 509–605 (FSWE…LQPP). Ser-339 is modified (phosphoserine). A Glycyl lysine isopeptide (Lys-Gly) (interchain with G-Cter in SUMO2) cross-link involves residue Lys-406. Positions 606 to 669 (VATEPTTPLK…KAPSEPAPDE (64 aa)) are disordered. Basic residues predominate over residues 620 to 635 (TKKKKKQFGKKRKRIP). Glycyl lysine isopeptide (Lys-Gly) (interchain with G-Cter in SUMO2) cross-links involve residues Lys-648, Lys-660, and Lys-676. The segment at 685–706 (ADKALSPELPVPVENIKQETDD) is disordered. A Phosphoserine modification is found at Ser-690. A Glycyl lysine isopeptide (Lys-Gly) (interchain with G-Cter in SUMO1); alternate cross-link involves residue Lys-701. Lys-701 participates in a covalent cross-link: Glycyl lysine isopeptide (Lys-Gly) (interchain with G-Cter in SUMO2); alternate.

Part of the E2F6.com-1 complex in G0 phase composed of E2F6, MGA, MAX, TFDP1, CBX3, BAT8, EUHMTASE1, RING1, RNF2, MBLR, BAT8 and YAF2.

The protein resides in the nucleus. Putative Polycomb group (PcG) protein. PcG proteins maintain the transcriptionally repressive state of genes, probably via a modification of chromatin, rendering it heritably changed in its expressibility. Its association with a chromatin-remodeling complex suggests that it may contribute to prevent expression of genes that trigger the cell into mitosis. Binds to monomethylated and dimethylated 'Lys-20' on histone H4. Binds histone H3 peptides that are monomethylated or dimethylated on 'Lys-4', 'Lys-9' or 'Lys-27'. The protein is Lethal(3)malignant brain tumor-like protein 2 (L3MBTL2) of Bos taurus (Bovine).